The chain runs to 553 residues: Serine protease 53 (553 aa).

The first 23 residues, 1–23 (MKWCWGPVLLIAGATVLMEGLQA), serve as a signal peptide directing secretion. Peptidase S1 domains follow at residues 24-273 (AQRA…ARVQ) and 294-526 (VACG…SLDW). The interval 27-46 (ACGQRGPGPPKPQEGNTVPG) is disordered. Cys-62 and Cys-78 are joined by a disulfide. Active-site charge relay system residues include His-77 and Asp-128. Disulfide bonds link Cys-158/Cys-230, Cys-187/Cys-209, Cys-220/Cys-249, and Cys-326/Cys-342. Active-site charge relay system residues include Ser-224, His-341, and Asp-382. 2 cysteine pairs are disulfide-bonded: Cys-444–Cys-464 and Cys-474–Cys-502. The active-site Charge relay system is Ser-478.

This sequence belongs to the peptidase S1 family. Predominantly detected in testis, liver, heart and ovary, as well as in several tumor cell lines.

Its subcellular location is the secreted. Functionally, in vitro can degrade the fibrinogen alpha chain of as well as pro-urokinase-type plasminogen activator. The protein is Serine protease 53 (PRSS53) of Homo sapiens (Human).